The sequence spans 1583 residues: Methyl-CpG-binding domain protein 5/6 homolog sba (1583 aa).

The segment at 81 to 115 (AVHQQQQQHHHQQQQQQQHQQQQQILPAGLVNGNG) is disordered. Residues 83–104 (HQQQQQHHHQQQQQQQHQQQQQ) are compositionally biased toward low complexity. The MBD domain maps to 238–308 (RKTATSYNGN…YLFDFNAQVP (71 aa)). 7 disordered regions span residues 427–457 (NKLP…PTSQ), 556–579 (EPIV…QQQL), 630–694 (VTLV…QTQV), 839–862 (AELH…AASS), 940–980 (PPAQ…ISPQ), 1179–1247 (VMSR…RSIC), and 1287–1339 (QESP…SFPL). A compositionally biased stretch (low complexity) spans 430–439 (PATNRTATTP). Residues 440 to 449 (TPAPTPPPQH) show a composition bias toward pro residues. Residues 563 to 579 (QQQQQQQQQQLQQQQQL) are compositionally biased toward low complexity. A compositionally biased stretch (polar residues) spans 658 to 677 (AISTSHESPRQSLSSPTDSV). Low complexity-rich tracts occupy residues 679–693 (SAKS…PQTQ) and 851–862 (VSQPSPVAAASS). 3 stretches are compositionally biased toward polar residues: residues 1179 to 1195 (VMSR…TTTC), 1216 to 1240 (CVSS…PSST), and 1287 to 1313 (QESP…TVRT). Over residues 1323 to 1333 (RGAARAAPSAS) the composition is skewed to low complexity. The region spanning 1346–1408 (IGELIWGPAR…VNSLQSLSEG (63 aa)) is the PWWP domain. The stretch at 1415–1446 (AQKDTRKSRKLNSQLERAIQEAMTELDNISAS) forms a coiled coil. Residues 1471–1497 (IGGQQQYQQQQQQQQQQQSPSSTNNKI) are disordered. Low complexity predominate over residues 1474–1488 (QQQYQQQQQQQQQQQ).

Component of the polycomb repressive deubiquitinase (PR-DUB) complex, at least composed of caly/calypso, Asx and sba (MDB5/6 homolog). Interacts (via MBD domain) with Asx (via PHD domain); the interaction is important for the stability of the PR-DUB complex.

In terms of biological role, non-catalytic component of the polycomb repressive deubiquitinase (PR-DUB) complex, a complex that specifically mediates deubiquitination of histone H2A monoubiquitinated at 'Lys-119' (H2AK118ub1). Important for maintaining stability of the PR-DUB complex. Probable epigenetic regulator involved in developmental pattern formation and eye development. The sequence is that of Methyl-CpG-binding domain protein 5/6 homolog sba from Drosophila melanogaster (Fruit fly).